We begin with the raw amino-acid sequence, 267 residues long: 2-keto-3-deoxy-L-rhamnonate aldolase (267 aa).

His-49 functions as the Proton acceptor in the catalytic mechanism. Gln-151 contributes to the substrate binding site. A Mg(2+)-binding site is contributed by Glu-153. Substrate-binding residues include Ala-178 and Asp-179. Asp-179 is a binding site for Mg(2+).

It belongs to the HpcH/HpaI aldolase family. KDR aldolase subfamily. As to quaternary structure, homohexamer. Mg(2+) is required as a cofactor.

The enzyme catalyses 2-dehydro-3-deoxy-L-rhamnonate = (S)-lactaldehyde + pyruvate. In terms of biological role, catalyzes the reversible retro-aldol cleavage of 2-keto-3-deoxy-L-rhamnonate (KDR) to pyruvate and lactaldehyde. The polypeptide is 2-keto-3-deoxy-L-rhamnonate aldolase (Shigella boydii serotype 4 (strain Sb227)).